A 176-amino-acid chain; its full sequence is Inner membrane-spanning protein YciB (176 aa).

Transmembrane regions (helical) follow at residues 23-43 (MIAA…FLYW), 50-70 (TMQW…IVLG), 74-94 (FIMW…LGSH), 119-139 (LTYM…FVFT), and 150-170 (MFGS…YLST).

The protein belongs to the YciB family.

The protein resides in the cell inner membrane. Plays a role in cell envelope biogenesis, maintenance of cell envelope integrity and membrane homeostasis. This Neisseria gonorrhoeae (strain ATCC 700825 / FA 1090) protein is Inner membrane-spanning protein YciB.